Consider the following 236-residue polypeptide: uncharacterized protein (236 aa).

A signal peptide spans 1-24 (MRKKHFNMILKLALISSLLALAAS). N-linked (GlcNAc...) asparagine glycans are attached at residues N59, N171, and N197.

The protein resides in the secreted. This is an uncharacterized protein from Caenorhabditis elegans.